The following is a 209-amino-acid chain: Outer-membrane lipoprotein carrier protein (209 aa).

The signal sequence occupies residues 1-22; it reads MKKLLLTLAMVPAVLFSPTAWG.

Belongs to the LolA family. As to quaternary structure, monomer.

It localises to the periplasm. Its function is as follows. Participates in the translocation of lipoproteins from the inner membrane to the outer membrane. Only forms a complex with a lipoprotein if the residue after the N-terminal Cys is not an aspartate (The Asp acts as a targeting signal to indicate that the lipoprotein should stay in the inner membrane). This Alcanivorax borkumensis (strain ATCC 700651 / DSM 11573 / NCIMB 13689 / SK2) protein is Outer-membrane lipoprotein carrier protein.